The sequence spans 849 residues: MEHLPMAFNTTNPLIQVEDDRTGLSVETLKRALADNLFYLQGKFPAIATKNDCYMALAYTIRDRLLQRWLNTFQTYLNCDNRVVCYLSAEYLLGPHLGNNLINLGLWEPVQQAVEESGLSLDELIDIEEEPGLGNGGLGRLAACFMDSLATLEIPAIGYGIRYEFGIFDQEIKDGWQVEITDKWLQLGNPWEIARPESAVLVKLGGHTEPYTDDQGNYRVRWIAGSLVKGIPYDTPILGYKVSTANNLRLWKSEAAESFDFQRFNVGDYYGAVQDKMSSENLTKVLYPNDEQIQGKELRLAQQYFFVSCSLQDMIRIHLSDNPTLENFHEHFAVQMNDTHPSIAVAELMRLLVDEHHYEWQRAWAITEATFGFTNHTLLPEALEKWSLPLFGEMLPRHLEIIYEINQRFLDQVRMKYPNDGDRLARLSIIDEAGEKSVRMAYLATVGSHAINGVAALHSQLVKETILKDFYELWPEKFSNKTNGVTPRRWMVLSNPRLSNLISSRIGDGWIKNLDELKQLEPFADLAGFRQDWCKVKREVKQDLARYIHTRTDLVVNPDSLFDVQVKRIHEYKRQHLNILHVIHLYLQIKNNPNLDVTPRTFIYGGKAAPGYFTAKLIIKLINSVADVVNNDPTIGDRLKVIFLPDYNVKFGQRVYPAADLSEQISTAGKEASGTGNMKFSMNGALTIGTLDGANIEIREEVGAENFFLFGLTTPEVEKTLAEGYQPWEYYNNNANLKAVVDLINSGFFSHGDTALFRPLMDSLLGQDPYLVFADFQAYVDCQNQVGEAYKDQENWARMAILNVARMGKFSSDRTIREYAEDIWAIKPVVIELEDLCPDGQCLLISPNK.

Lys679 carries the N6-(pyridoxal phosphate)lysine modification.

It belongs to the glycogen phosphorylase family. Pyridoxal 5'-phosphate serves as cofactor.

It carries out the reaction [(1-&gt;4)-alpha-D-glucosyl](n) + phosphate = [(1-&gt;4)-alpha-D-glucosyl](n-1) + alpha-D-glucose 1-phosphate. Phosphorylase is an important allosteric enzyme in carbohydrate metabolism. Enzymes from different sources differ in their regulatory mechanisms and in their natural substrates. However, all known phosphorylases share catalytic and structural properties. The sequence is that of Glycogen phosphorylase (glgP) from Synechocystis sp. (strain ATCC 27184 / PCC 6803 / Kazusa).